We begin with the raw amino-acid sequence, 318 residues long: DNA primase small subunit PriS (318 aa).

Catalysis depends on residues aspartate 95, aspartate 97, and aspartate 224.

It belongs to the eukaryotic-type primase small subunit family. Heterodimer of a small subunit (PriS) and a large subunit (PriL). The cofactor is Mg(2+). It depends on Mn(2+) as a cofactor.

Functionally, catalytic subunit of DNA primase, an RNA polymerase that catalyzes the synthesis of short RNA molecules used as primers for DNA polymerase during DNA replication. The small subunit contains the primase catalytic core and has DNA synthesis activity on its own. Binding to the large subunit stabilizes and modulates the activity, increasing the rate of DNA synthesis while decreasing the length of the DNA fragments, and conferring RNA synthesis capability. The DNA polymerase activity may enable DNA primase to also catalyze primer extension after primer synthesis. May also play a role in DNA repair. This chain is DNA primase small subunit PriS, found in Sulfurisphaera tokodaii (strain DSM 16993 / JCM 10545 / NBRC 100140 / 7) (Sulfolobus tokodaii).